The following is a 500-amino-acid chain: 4-alpha-glucanotransferase (500 aa).

It belongs to the disproportionating enzyme family.

The protein resides in the cytoplasm. The enzyme catalyses Transfers a segment of a (1-&gt;4)-alpha-D-glucan to a new position in an acceptor, which may be glucose or a (1-&gt;4)-alpha-D-glucan.. The protein is 4-alpha-glucanotransferase (malQ) of Thermus thermophilus.